Consider the following 164-residue polypeptide: NADPH-dependent 7-cyano-7-deazaguanine reductase (164 aa).

The Thioimide intermediate role is filled by Cys55. Asp62 serves as the catalytic Proton donor. Substrate contacts are provided by residues 77–79 (VES) and 96–97 (HE).

The protein belongs to the GTP cyclohydrolase I family. QueF type 1 subfamily.

The protein resides in the cytoplasm. The enzyme catalyses 7-aminomethyl-7-carbaguanine + 2 NADP(+) = 7-cyano-7-deazaguanine + 2 NADPH + 3 H(+). Its pathway is tRNA modification; tRNA-queuosine biosynthesis. In terms of biological role, catalyzes the NADPH-dependent reduction of 7-cyano-7-deazaguanine (preQ0) to 7-aminomethyl-7-deazaguanine (preQ1). In Bacillus velezensis (strain DSM 23117 / BGSC 10A6 / LMG 26770 / FZB42) (Bacillus amyloliquefaciens subsp. plantarum), this protein is NADPH-dependent 7-cyano-7-deazaguanine reductase.